The sequence spans 163 residues: Epithelial membrane protein 3 (163 aa).

A helical membrane pass occupies residues 4-24 (LLLVVSALHILILILLFVATL). 2 N-linked (GlcNAc...) asparagine glycosylation sites follow: Asn-49 and Asn-56. 3 helical membrane passes run 66–86 (VQVL…LFMF), 100–120 (TGFC…IYAI), and 139–159 (FALA…YIHL).

It belongs to the PMP-22/EMP/MP20 family.

The protein resides in the membrane. Its function is as follows. Probably involved in cell proliferation and cell-cell interactions. This Bos taurus (Bovine) protein is Epithelial membrane protein 3 (EMP3).